The chain runs to 330 residues: Aspartate--ammonia ligase (330 aa).

Belongs to the class-II aminoacyl-tRNA synthetase family. AsnA subfamily.

Its subcellular location is the cytoplasm. The enzyme catalyses L-aspartate + NH4(+) + ATP = L-asparagine + AMP + diphosphate + H(+). The protein operates within amino-acid biosynthesis; L-asparagine biosynthesis; L-asparagine from L-aspartate (ammonia route): step 1/1. The sequence is that of Aspartate--ammonia ligase from Shigella boydii serotype 18 (strain CDC 3083-94 / BS512).